We begin with the raw amino-acid sequence, 196 residues long: MLSFHQLKFNIYQKQLFDNLSITFLDSAITYIKGANGCGKTSLLRMIAGIMQPSNGNIFYKNLNINNIAKPYCTYIGHNLGLKLEMTVFENLKFWSEIYNSVETLDAAIHYFKLYDLLDEKCYTLSSGLQKVVALARLIACQSDLWLLDEVETNLSKENRDLLNNLIVMKANSGGIVLLSSHTENHIKSAQILQLT.

The region spanning 2–195 (LSFHQLKFNI…HIKSAQILQL (194 aa)) is the ABC transporter domain. 34–41 (GANGCGKT) is an ATP binding site.

Belongs to the ABC transporter superfamily. CcmA exporter (TC 3.A.1.107) family. In terms of assembly, the complex is composed of two ATP-binding proteins (CcmA) and two transmembrane proteins (CcmB).

Its subcellular location is the cell inner membrane. It catalyses the reaction heme b(in) + ATP + H2O = heme b(out) + ADP + phosphate + H(+). Its function is as follows. Part of the ABC transporter complex CcmAB involved in the biogenesis of c-type cytochromes; once thought to export heme, this seems not to be the case, but its exact role is uncertain. Responsible for energy coupling to the transport system. In Rickettsia bellii (strain RML369-C), this protein is Cytochrome c biogenesis ATP-binding export protein CcmA.